Reading from the N-terminus, the 230-residue chain is Lipoprotein-releasing system ATP-binding protein LolD (230 aa).

The ABC transporter domain occupies 6-230 (LQVQAVSKSY…GYLQVPESAQ (225 aa)). 42–49 (GTSGSGKS) provides a ligand contact to ATP.

Belongs to the ABC transporter superfamily. Lipoprotein translocase (TC 3.A.1.125) family. As to quaternary structure, the complex is composed of two ATP-binding proteins (LolD) and two transmembrane proteins (LolC and LolE).

Its subcellular location is the cell inner membrane. Functionally, part of the ABC transporter complex LolCDE involved in the translocation of mature outer membrane-directed lipoproteins, from the inner membrane to the periplasmic chaperone, LolA. Responsible for the formation of the LolA-lipoprotein complex in an ATP-dependent manner. The chain is Lipoprotein-releasing system ATP-binding protein LolD from Shewanella oneidensis (strain ATCC 700550 / JCM 31522 / CIP 106686 / LMG 19005 / NCIMB 14063 / MR-1).